The sequence spans 288 residues: Sulfur carrier protein FdhD (288 aa).

The disordered stretch occupies residues 1–23 (MMRCMQSPEVHPAAAGDAEPPTH). Residue cysteine 127 is the Cysteine persulfide intermediate of the active site.

This sequence belongs to the FdhD family.

It is found in the cytoplasm. In terms of biological role, required for formate dehydrogenase (FDH) activity. Acts as a sulfur carrier protein that transfers sulfur from IscS to the molybdenum cofactor prior to its insertion into FDH. In Cupriavidus necator (strain ATCC 17699 / DSM 428 / KCTC 22496 / NCIMB 10442 / H16 / Stanier 337) (Ralstonia eutropha), this protein is Sulfur carrier protein FdhD.